Reading from the N-terminus, the 503-residue chain is MALWRTNDSKVYLPPAPVSRIVNTEEYITRTGIYYYAGSSRLITLGHPYFSIPKTNTRAEIPKVSAFQYRVFRVQLPDPNKFGLPDPNLFNPDTDRLVWGCVGVEVGRGQPLGVGLSGHPLFNKYDDTENSRFANGNDQQDVRDNISVDNKQTQLCIIGCAPPIGEHWATGTTCKNVPVPQGDCPPLELVSTVIEDGDMVDTGFGAMDFANLQATKSDVPLDIAQSVCKYPDYLKMSADTYGNSMFFHLRREQIFARHYYNKAGVVGDAIPDKAYIKGTGAGRDPISSYIYSATPSGSMITSDSQIFNKPYWLHRAQGHNNGICWNNQLFITCVDTTKSTNLTISTAVTPSVAQTFTPANFKQYIRHGEEYELQFIFQLCKITLTTEIMAYLHTMDSTILEQWNFGLTLPPSASLEDAYRFVKNAATSCHKDSPPQAKEDPLAKYKFWNVDLKERFSLDLDQFALGRKFLLQIGAQRKPRPGLKRPAPSSSASSSAKRKRVKK.

Residues 476 to 503 form a disordered region; it reads QRKPRPGLKRPAPSSSASSSAKRKRVKK. A compositionally biased stretch (low complexity) spans 484–495; that stretch reads KRPAPSSSASSS.

It belongs to the papillomaviridae L1 protein family. Self-assembles into homopentamers. The capsid has an icosahedral symmetry and consists of 72 capsomers, with each capsomer being a pentamer of L1. Interacts with the minor capsid protein L2; this interaction is necessary for viral genome encapsidation. Interacts with protein E2; this interaction enhances E2-dependent replication and transcription activation.

It is found in the virion. The protein resides in the host nucleus. Functionally, forms an icosahedral capsid with a T=7 symmetry and a 50 nm diameter. The capsid is composed of 72 pentamers linked to each other by disulfide bonds and associated with L2 proteins. Binds to heparan sulfate proteoglycans on cell surface of basal layer keratinocytes to provide initial virion attachment. This binding mediates a conformational change in the virus capsid that facilitates efficient infection. The virion enters the host cell via endocytosis. During virus trafficking, L1 protein dissociates from the viral DNA and the genomic DNA is released to the host nucleus. The virion assembly takes place within the cell nucleus. Encapsulates the genomic DNA together with protein L2. The polypeptide is Major capsid protein L1 (Homo sapiens (Human)).